A 151-amino-acid chain; its full sequence is Ribosome maturation factor RimP (151 aa).

This sequence belongs to the RimP family.

The protein localises to the cytoplasm. Functionally, required for maturation of 30S ribosomal subunits. The chain is Ribosome maturation factor RimP from Endomicrobium trichonymphae.